We begin with the raw amino-acid sequence, 302 residues long: 33 kDa chaperonin (302 aa).

Disulfide bonds link cysteine 247/cysteine 249 and cysteine 280/cysteine 283.

Belongs to the HSP33 family. In terms of processing, under oxidizing conditions two disulfide bonds are formed involving the reactive cysteines. Under reducing conditions zinc is bound to the reactive cysteines and the protein is inactive.

It is found in the cytoplasm. In terms of biological role, redox regulated molecular chaperone. Protects both thermally unfolding and oxidatively damaged proteins from irreversible aggregation. Plays an important role in the bacterial defense system toward oxidative stress. This is 33 kDa chaperonin from Prochlorococcus marinus (strain AS9601).